The chain runs to 429 residues: Adenylosuccinate synthetase (429 aa).

Residues 12 to 18 and 40 to 42 each bind GTP; these read GDEGKGK and GHT. Asp13 (proton acceptor) is an active-site residue. The Mg(2+) site is built by Asp13 and Gly40. IMP is bound by residues 13–16, 38–41, Thr129, Arg143, Gln224, Thr239, and Arg303; these read DEGK and NAGH. The active-site Proton donor is the His41. Substrate is bound at residue 299-305; sequence VTTGRAR. GTP contacts are provided by residues Arg305, 331-333, and 413-415; these read KLD and GVG.

This sequence belongs to the adenylosuccinate synthetase family. Homodimer. Requires Mg(2+) as cofactor.

The protein localises to the cytoplasm. The catalysed reaction is IMP + L-aspartate + GTP = N(6)-(1,2-dicarboxyethyl)-AMP + GDP + phosphate + 2 H(+). The protein operates within purine metabolism; AMP biosynthesis via de novo pathway; AMP from IMP: step 1/2. Plays an important role in the de novo pathway of purine nucleotide biosynthesis. Catalyzes the first committed step in the biosynthesis of AMP from IMP. The protein is Adenylosuccinate synthetase of Rhodococcus opacus (strain B4).